A 966-amino-acid polypeptide reads, in one-letter code: Glycine dehydrogenase (decarboxylating) (966 aa).

Position 713 is an N6-(pyridoxal phosphate)lysine (K713).

Belongs to the GcvP family. The glycine cleavage system is composed of four proteins: P, T, L and H. It depends on pyridoxal 5'-phosphate as a cofactor.

The enzyme catalyses N(6)-[(R)-lipoyl]-L-lysyl-[glycine-cleavage complex H protein] + glycine + H(+) = N(6)-[(R)-S(8)-aminomethyldihydrolipoyl]-L-lysyl-[glycine-cleavage complex H protein] + CO2. In terms of biological role, the glycine cleavage system catalyzes the degradation of glycine. The P protein binds the alpha-amino group of glycine through its pyridoxal phosphate cofactor; CO(2) is released and the remaining methylamine moiety is then transferred to the lipoamide cofactor of the H protein. In Psychromonas ingrahamii (strain DSM 17664 / CCUG 51855 / 37), this protein is Glycine dehydrogenase (decarboxylating).